The chain runs to 277 residues: Glutamate racemase (277 aa).

Substrate-binding positions include 16 to 17 (DS) and 48 to 49 (YG). The active-site Proton donor/acceptor is the Cys79. 80–81 (NT) provides a ligand contact to substrate. Cys191 serves as the catalytic Proton donor/acceptor. Substrate is bound at residue 192–193 (TH).

It belongs to the aspartate/glutamate racemases family.

The enzyme catalyses L-glutamate = D-glutamate. The protein operates within cell wall biogenesis; peptidoglycan biosynthesis. Functionally, provides the (R)-glutamate required for cell wall biosynthesis. The protein is Glutamate racemase of Symbiobacterium thermophilum (strain DSM 24528 / JCM 14929 / IAM 14863 / T).